We begin with the raw amino-acid sequence, 290 residues long: tRNA (guanine-N(7)-)-methyltransferase (290 aa).

Composition is skewed to basic and acidic residues over residues 1–12 (MSDSLHTPEEPR) and 20–43 (AHAH…DGPK). The segment at 1 to 49 (MSDSLHTPEEPRPGPGEQLAHAHDGSLRHTRAKGEPRFPDGPKADPAGS) is disordered. Residues E104, D129, D156, and D179 each coordinate S-adenosyl-L-methionine. The active site involves D179. Substrate-binding positions include K183, D215, and 252-255 (TRFE).

This sequence belongs to the class I-like SAM-binding methyltransferase superfamily. TrmB family.

It carries out the reaction guanosine(46) in tRNA + S-adenosyl-L-methionine = N(7)-methylguanosine(46) in tRNA + S-adenosyl-L-homocysteine. It participates in tRNA modification; N(7)-methylguanine-tRNA biosynthesis. In terms of biological role, catalyzes the formation of N(7)-methylguanine at position 46 (m7G46) in tRNA. This chain is tRNA (guanine-N(7)-)-methyltransferase, found in Streptomyces avermitilis (strain ATCC 31267 / DSM 46492 / JCM 5070 / NBRC 14893 / NCIMB 12804 / NRRL 8165 / MA-4680).